The sequence spans 528 residues: Beta-galactoside alpha-2,6-sialyltransferase 2 (528 aa).

Topologically, residues 1 to 10 (MKPNLKQWKQ) are cytoplasmic. A helical; Signal-anchor for type II membrane protein membrane pass occupies residues 11 to 31 (LMLFGIFAWGLLFLVIFIYFT). Topologically, residues 32-528 (DSNSAEPVPS…CPERNNFPPL (497 aa)) are lumenal. N-linked (GlcNAc...) asparagine glycans are attached at residues asparagine 167, asparagine 308, and asparagine 338. Disulfide bonds link cysteine 254–cysteine 519, cysteine 297–cysteine 448, and cysteine 466–cysteine 477.

This sequence belongs to the glycosyltransferase 29 family.

It localises to the golgi apparatus. The protein resides in the golgi stack membrane. The catalysed reaction is a beta-D-galactoside + CMP-N-acetyl-beta-neuraminate = an N-acetyl-alpha-neuraminyl-(2-&gt;6)-beta-D-galactosyl derivative + CMP + H(+). In terms of biological role, transfers sialic acid from the donor of substrate CMP-sialic acid to galactose containing acceptor substrates. This Gallus gallus (Chicken) protein is Beta-galactoside alpha-2,6-sialyltransferase 2 (ST6GAL2).